Here is a 65-residue protein sequence, read N- to C-terminus: Subtilisin inhibitor CLSI-I (65 aa).

This sequence belongs to the protease inhibitor I13 (potato type I serine protease inhibitor) family.

Inhibits subtilisin-type microbial serine proteases including proteinase K, subtilisin BPN', subtilisin Carlsberg, subtilisin E, A.oryzae protease and S.griseus alkaline protease. Weakly inhibits pronase E. Does not inhibit trypsin or chymotrypsin. This is Subtilisin inhibitor CLSI-I from Canavalia lineata (Beach bean).